The following is a 484-amino-acid chain: ATP synthase subunit beta (484 aa).

156–163 contributes to the ATP binding site; sequence GGAGVGKT.

The protein belongs to the ATPase alpha/beta chains family. In terms of assembly, F-type ATPases have 2 components, CF(1) - the catalytic core - and CF(0) - the membrane proton channel. CF(1) has five subunits: alpha(3), beta(3), gamma(1), delta(1), epsilon(1). CF(0) has three main subunits: a(1), b(2) and c(9-12). The alpha and beta chains form an alternating ring which encloses part of the gamma chain. CF(1) is attached to CF(0) by a central stalk formed by the gamma and epsilon chains, while a peripheral stalk is formed by the delta and b chains.

Its subcellular location is the cell inner membrane. The enzyme catalyses ATP + H2O + 4 H(+)(in) = ADP + phosphate + 5 H(+)(out). Its function is as follows. Produces ATP from ADP in the presence of a proton gradient across the membrane. The catalytic sites are hosted primarily by the beta subunits. This is ATP synthase subunit beta from Rhizorhabdus wittichii (strain DSM 6014 / CCUG 31198 / JCM 15750 / NBRC 105917 / EY 4224 / RW1) (Sphingomonas wittichii).